Here is a 68-residue protein sequence, read N- to C-terminus: Beta-defensin 1 (68 aa).

A signal peptide spans 1–21 (MRTSYLLLFTLCLLMSEMASG). Residues 22–32 (DNFLTGLGHRS) constitute a propeptide that is removed on maturation. Disulfide bonds link cysteine 37–cysteine 66, cysteine 44–cysteine 59, and cysteine 49–cysteine 67.

The protein belongs to the beta-defensin family. As to quaternary structure, monomer. Homodimer.

It localises to the secreted. Its subcellular location is the membrane. Functionally, has bactericidal activity. May act as a ligand for C-C chemokine receptor CCR6. Positively regulates the sperm motility and bactericidal activity in a CCR6-dependent manner. Binds to CCR6 and triggers Ca2+ mobilization in the sperm which is important for its motility. In Presbytis melalophos (Mitred leaf monkey), this protein is Beta-defensin 1 (DEFB1).